We begin with the raw amino-acid sequence, 838 residues long: Probable inorganic carbon transporter subunit DabA (838 aa).

Zn(2+) is bound by residues cysteine 353, aspartate 355, histidine 537, and cysteine 552.

The protein belongs to the inorganic carbon transporter (TC 9.A.2) DabA family. As to quaternary structure, forms a complex with DabB. It depends on Zn(2+) as a cofactor.

It is found in the cell membrane. Functionally, part of an energy-coupled inorganic carbon pump. The sequence is that of Probable inorganic carbon transporter subunit DabA from Roseiflexus sp. (strain RS-1).